Consider the following 264-residue polypeptide: Small ribosomal subunit protein eS1 (264 aa).

The segment at 233–264 (GEGGGAGKPSGDEAGAKVERADGYEPPVQESV) is disordered. Residues 242–255 (SGDEAGAKVERADG) are compositionally biased toward basic and acidic residues.

The protein belongs to the eukaryotic ribosomal protein eS1 family. As to quaternary structure, component of the small ribosomal subunit. Mature ribosomes consist of a small (40S) and a large (60S) subunit. The 40S subunit contains about 33 different proteins and 1 molecule of RNA (18S). The 60S subunit contains about 49 different proteins and 3 molecules of RNA (25S, 5.8S and 5S).

Its subcellular location is the cytoplasm. In Eimeria tenella (Coccidian parasite), this protein is Small ribosomal subunit protein eS1.